Here is a 256-residue protein sequence, read N- to C-terminus: Chorismate mutase (256 aa).

The Chorismate mutase domain maps to 3-255 (FTKPETVLNL…EVEYLLRRLE (253 aa)). L-tyrosine contacts are provided by R75 and R76. Residues N138, N139, G141, and S142 each coordinate L-tryptophan. Positions 139, 141, 142, and 145 each coordinate L-tyrosine.

Homodimer.

The protein resides in the cytoplasm. The catalysed reaction is chorismate = prephenate. It functions in the pathway metabolic intermediate biosynthesis; prephenate biosynthesis; prephenate from chorismate: step 1/1. Its activity is regulated as follows. Each dimer has two allosteric binding sites that can bind the regulatory effectors tryptophan or tyrosine. Can bind either one tryptophan or one tyrosine, two tryptophan or two tyrosine or one tryptophan and one tyrosine, which differentially affect the catalytic activity. Activated by tryptophan and subject to feedback inhibition by tyrosine. In the presence of both tryptophan and tyrosine, the enzyme is in the activated state. Its function is as follows. Catalyzes the Claisen rearrangement of chorismate to prephenate. Acts at the first branch point in the aromatic amino acid pathway where it steers biosynthesis towards phenylalanine and tyrosine, and away from tryptophan. In Saccharomyces cerevisiae (strain ATCC 204508 / S288c) (Baker's yeast), this protein is Chorismate mutase.